The sequence spans 149 residues: 3-hydroxyacyl-[acyl-carrier-protein] dehydratase FabZ (149 aa).

H48 is a catalytic residue.

This sequence belongs to the thioester dehydratase family. FabZ subfamily.

It is found in the cytoplasm. The enzyme catalyses a (3R)-hydroxyacyl-[ACP] = a (2E)-enoyl-[ACP] + H2O. Functionally, involved in unsaturated fatty acids biosynthesis. Catalyzes the dehydration of short chain beta-hydroxyacyl-ACPs and long chain saturated and unsaturated beta-hydroxyacyl-ACPs. This is 3-hydroxyacyl-[acyl-carrier-protein] dehydratase FabZ from Thermomicrobium roseum (strain ATCC 27502 / DSM 5159 / P-2).